We begin with the raw amino-acid sequence, 919 residues long: TRPM8 channel-associated factor 2 (919 aa).

In terms of domain architecture, Peptidase M60 spans 543–842 (DVWMSTGLYL…TYLQLQEVFG (300 aa)).

This sequence belongs to the TCAF family. In terms of assembly, interacts with TRPM8 (via N-terminus and C-terminus domains); the interaction inhibits TRPM8 channel activity. Interacts with TRPV6.

The protein localises to the cell membrane. Negatively regulates the plasma membrane cation channel TRPM8 activity. Involved in the recruitment of TRPM8 to the cell surface. Promotes prostate cancer cell migration stimulation in a TRPM8-dependent manner. The protein is TRPM8 channel-associated factor 2 of Mus musculus (Mouse).